The primary structure comprises 395 residues: Bifunctional enzyme IspD/IspF (395 aa).

The tract at residues 1-237 (MRTWVLLLAA…DANEPQVTVP (237 aa)) is 2-C-methyl-D-erythritol 4-phosphate cytidylyltransferase. Positions 238 to 395 (CVGWGYDVHR…AAVTGLRPMP (158 aa)) are 2-C-methyl-D-erythritol 2,4-cyclodiphosphate synthase. A divalent metal cation is bound by residues Asp-244 and His-246. Residues 244–246 (DVH) and 270–271 (HS) each bind 4-CDP-2-C-methyl-D-erythritol 2-phosphate. His-278 is a binding site for a divalent metal cation. 4-CDP-2-C-methyl-D-erythritol 2-phosphate is bound by residues 292–294 (DIG), 297–301 (FPDSD), 368–371 (TTEE), and Phe-375.

This sequence in the N-terminal section; belongs to the IspD/TarI cytidylyltransferase family. IspD subfamily. It in the C-terminal section; belongs to the IspF family. A divalent metal cation serves as cofactor.

The catalysed reaction is 2-C-methyl-D-erythritol 4-phosphate + CTP + H(+) = 4-CDP-2-C-methyl-D-erythritol + diphosphate. It carries out the reaction 4-CDP-2-C-methyl-D-erythritol 2-phosphate = 2-C-methyl-D-erythritol 2,4-cyclic diphosphate + CMP. Its pathway is isoprenoid biosynthesis; isopentenyl diphosphate biosynthesis via DXP pathway; isopentenyl diphosphate from 1-deoxy-D-xylulose 5-phosphate: step 2/6. The protein operates within isoprenoid biosynthesis; isopentenyl diphosphate biosynthesis via DXP pathway; isopentenyl diphosphate from 1-deoxy-D-xylulose 5-phosphate: step 4/6. In terms of biological role, bifunctional enzyme that catalyzes the formation of 4-diphosphocytidyl-2-C-methyl-D-erythritol from CTP and 2-C-methyl-D-erythritol 4-phosphate (MEP) (IspD), and catalyzes the conversion of 4-diphosphocytidyl-2-C-methyl-D-erythritol 2-phosphate (CDP-ME2P) to 2-C-methyl-D-erythritol 2,4-cyclodiphosphate (ME-CPP) with a corresponding release of cytidine 5-monophosphate (CMP) (IspF). This is Bifunctional enzyme IspD/IspF from Nitratidesulfovibrio vulgaris (strain ATCC 29579 / DSM 644 / CCUG 34227 / NCIMB 8303 / VKM B-1760 / Hildenborough) (Desulfovibrio vulgaris).